Consider the following 697-residue polypeptide: Colicin-D (697 aa).

Positions 17-24 (HSMVVWPS) match the TonB box motif.

It belongs to the cloacin colicin family.

Colicins are polypeptide toxins produced by and active against E.coli and closely related bacteria. Functionally, colicin D inhibits protein synthesis. This Escherichia coli protein is Colicin-D (cda).